The sequence spans 805 residues: Angiotensin-converting enzyme 2 (805 aa).

The N-terminal stretch at 1 to 17 (MSGSSWLLLSLVAVTAA) is a signal peptide. Residues 18-740 (QSTIEEQAKT…LGPPNQPPVS (723 aa)) lie on the Extracellular side of the membrane. The region spanning 19–607 (STIEEQAKTF…QNKNSFVGWS (589 aa)) is the Peptidase M2 domain. 3 N-linked (GlcNAc...) asparagine glycosylation sites follow: N53, N90, and N103. A disulfide bridge connects residues C133 and C141. R169 contributes to the chloride binding site. Residue R273 participates in substrate binding. An N-linked (GlcNAc...) asparagine glycan is attached at N322. A disulfide bridge connects residues C344 and C361. A substrate-binding site is contributed by 345–346 (HP). Residue H374 participates in Zn(2+) binding. The active-site Proton acceptor is the E375. Residues H378 and E402 each contribute to the Zn(2+) site. A glycan (N-linked (GlcNAc...) asparagine) is linked at N432. W477 and K481 together coordinate chloride. H505 functions as the Proton donor in the catalytic mechanism. Y515 is a binding site for substrate. Cysteines 530 and 542 form a disulfide. A glycan (N-linked (GlcNAc...) asparagine) is linked at N546. Residues 614–805 (ADQSIKVRIS…QNTDDVQTSF (192 aa)) form the Collectrin-like domain. The tract at residues 652–659 (RKYFLEVK) is essential for cleavage by ADAM17. A glycan (N-linked (GlcNAc...) asparagine) is linked at N690. Residues 697-716 (RTEVEKAIRMSRSRINDAFR) are essential for cleavage by TMPRSS11D and TMPRSS2. A helical membrane pass occupies residues 741–761 (IWLIVFGVVMGVIVVGIVVLI). Residues 762 to 805 (FTGIRDRKKKNKARNEENPYASIDISKGENNPGFQNTDDVQTSF) are Cytoplasmic-facing. The tract at residues 772–805 (NKARNEENPYASIDISKGENNPGFQNTDDVQTSF) is disordered. Positions 778–786 (ENPYASIDI) match the LIR motif. The residue at position 781 (Y781) is a Phosphotyrosine. Residues 781-784 (YASI) carry the Endocytic sorting signal motif. The SH2-binding signature appears at 781–785 (YASID). The residue at position 783 (S783) is a Phosphoserine. A Glycyl lysine isopeptide (Lys-Gly) (interchain with G-Cter in ubiquitin) cross-link involves residue K788. Over residues 789-805 (GENNPGFQNTDDVQTSF) the composition is skewed to polar residues. The short motif at 792–795 (NPGF) is the PTB element. Positions 803-805 (TSF) match the PDZ-binding motif.

This sequence belongs to the peptidase M2 family. Homodimer. Interacts with the catalytically active form of TMPRSS2. Interacts with SLC6A19; this interaction is essential for expression and function of SLC6A19 in intestine. Interacts with ITGA5:ITGB1. Probably interacts (via endocytic sorting signal motif) with AP2M1; the interaction is inhibited by phosphorylation of Tyr-781. Interacts (via PDZ-binding motif) with NHERF1 (via PDZ domains); the interaction may enhance ACE2 membrane residence. Zn(2+) serves as cofactor. The cofactor is chloride. Post-translationally, proteolytic cleavage by ADAM17 generates a secreted form. Also cleaved by serine proteases: TMPRSS2, TMPRSS11D and HPN/TMPRSS1. In terms of processing, phosphorylated. Phosphorylation at Tyr-781 probably inhibits interaction with AP2M1 and enables interactions with proteins containing SH2 domains. Ubiquitinated. Ubiquitinated on Lys-788 via 'Lys-48'-linked ubiquitin. 'Lys-48'-linked deubiquitinated by USP50 on the Lys-788; leading to its stabilization.

The protein localises to the secreted. Its subcellular location is the cell membrane. It is found in the cytoplasm. The protein resides in the cell projection. It localises to the cilium. The protein localises to the apical cell membrane. It carries out the reaction angiotensin II + H2O = angiotensin-(1-7) + L-phenylalanine. The enzyme catalyses angiotensin I + H2O = angiotensin-(1-9) + L-leucine. The catalysed reaction is bradykinin(1-8) + H2O = bradykinin(1-7) + L-phenylalanine. It catalyses the reaction neurotensin + H2O = neurotensin-(1-12) + L-leucine. It carries out the reaction kinetensin + H2O = kinetensin-(1-8) + L-leucine. The enzyme catalyses dynorphin A-(1-13) + H2O = dynorphin A-(1-12) + L-lysine. The catalysed reaction is apelin-13 + H2O = apelin-12 + L-phenylalanine. It catalyses the reaction [Pyr1]apelin-13 + H2O = [Pyr1]apelin-12 + L-phenylalanine. It carries out the reaction apelin-17 + H2O = apelin-16 + L-phenylalanine. Functionally, essential counter-regulatory carboxypeptidase of the renin-angiotensin hormone system that is a critical regulator of blood volume, systemic vascular resistance, and thus cardiovascular homeostasis. Converts angiotensin I to angiotensin 1-9, a nine-amino acid peptide with anti-hypertrophic effects in cardiomyocytes, and angiotensin II to angiotensin 1-7, which then acts as a beneficial vasodilator and anti-proliferation agent, counterbalancing the actions of the vasoconstrictor angiotensin II. Also removes the C-terminal residue from three other vasoactive peptides, neurotensin, kinetensin, and des-Arg bradykinin, but is not active on bradykinin. Also cleaves other biological peptides, such as apelins, casomorphins and dynorphin A. Plays an important role in amino acid transport by acting as binding partner of amino acid transporter SLC6A19 in intestine, regulating trafficking, expression on the cell surface, and its catalytic activity. This chain is Angiotensin-converting enzyme 2 (ACE2), found in Pongo abelii (Sumatran orangutan).